Consider the following 444-residue polypeptide: MSNTILQNLPKGQKVGIAFSGGLDTSAALLWMRQKGAVPYAYTANLGQPDEDDYNAIPKKAMAYGAENARLIDCRSQLAHEGIAAIQCGAFHISTGGIPYFNTTPLGRAVTGTMLVAAMKEDDVNIWGDGSTFKGNDIERFYRYGLLTNPNLKIYKPWLDVQFIEELGGRLEMSQFLIENGFDYKMSVEKAYSTDSNMLGATHEAKDLEQLSTGMKIVKPIMGVAFWDEKVEIKPETVTVTFEDGVPVALNGKHFDNAVDLILEANRIGGRHGLGMSDQIENRIIEAKSRGIYEAPGMALLHIAYERLVTGIHNEDTIEQYRINGIRLGRLLYQGRWFDPQALMLRETAQRWVAKAITGTVTLELRRGNDFTILNTESPNLTYEAERLSMEKVEDAPFDPVDRIGQLTMRNLDVSDTRGKLGIYAQTGLLSAIKDSVLPQLGKK.

ATP-binding positions include 18-26 (AFSGGLDTS) and Ala44. Tyr100 is an L-citrulline binding site. Residues Gly130 and Thr132 each coordinate ATP. Thr132, Asn136, and Asp137 together coordinate L-aspartate. Asn136 contacts L-citrulline. Asp137 contributes to the ATP binding site. 2 residues coordinate L-citrulline: Arg140 and Ser193. An ATP-binding site is contributed by Asp195. L-citrulline contacts are provided by Thr202, Glu204, and Glu281.

The protein belongs to the argininosuccinate synthase family. Type 2 subfamily. In terms of assembly, homotetramer.

It is found in the cytoplasm. The enzyme catalyses L-citrulline + L-aspartate + ATP = 2-(N(omega)-L-arginino)succinate + AMP + diphosphate + H(+). The protein operates within amino-acid biosynthesis; L-arginine biosynthesis; L-arginine from L-ornithine and carbamoyl phosphate: step 2/3. This Haemophilus influenzae (strain PittEE) protein is Argininosuccinate synthase.